The following is a 123-amino-acid chain: uncharacterized protein (123 aa).

Residues 100-123 (NKQPKTTHHFSTNSSEYKSRKSKH) form a disordered region.

This is an uncharacterized protein from Acanthamoeba polyphaga mimivirus (APMV).